A 299-amino-acid polypeptide reads, in one-letter code: Tyrosine recombinase XerC (299 aa).

The Core-binding (CB) domain occupies 1 to 86; sequence MRNELLDFLE…AIRSLFKFLT (86 aa). In terms of domain architecture, Tyr recombinase spans 107–293; it reads KLPEFLSIEE…NQARMTEVYN (187 aa). Active-site residues include Arg-146, Lys-170, His-245, Arg-248, and His-271. The active-site O-(3'-phospho-DNA)-tyrosine intermediate is Tyr-280.

The protein belongs to the 'phage' integrase family. XerC subfamily. As to quaternary structure, forms a cyclic heterotetrameric complex composed of two molecules of XerC and two molecules of XerD.

Its subcellular location is the cytoplasm. In terms of biological role, site-specific tyrosine recombinase, which acts by catalyzing the cutting and rejoining of the recombining DNA molecules. The XerC-XerD complex is essential to convert dimers of the bacterial chromosome into monomers to permit their segregation at cell division. It also contributes to the segregational stability of plasmids. In Natranaerobius thermophilus (strain ATCC BAA-1301 / DSM 18059 / JW/NM-WN-LF), this protein is Tyrosine recombinase XerC.